Here is a 386-residue protein sequence, read N- to C-terminus: O-phospho-L-seryl-tRNA:Cys-tRNA synthase (386 aa).

Pyridoxal 5'-phosphate-binding positions include 89–90 (AR), Asn-196, and 219–221 (SGH). N6-(pyridoxal phosphate)lysine is present on Lys-222.

It belongs to the SepCysS family. In terms of assembly, homodimer. Interacts with SepRS. The cofactor is pyridoxal 5'-phosphate.

The catalysed reaction is O-phospho-L-seryl-tRNA(Cys) + hydrogen sulfide + H(+) = L-cysteinyl-tRNA(Cys) + phosphate. In terms of biological role, converts O-phospho-L-seryl-tRNA(Cys) (Sep-tRNA(Cys)) to L-cysteinyl-tRNA(Cys) (Cys-tRNA(Cys)). In Methanosarcina acetivorans (strain ATCC 35395 / DSM 2834 / JCM 12185 / C2A), this protein is O-phospho-L-seryl-tRNA:Cys-tRNA synthase.